The primary structure comprises 323 residues: MSQVSITQLFEENQEKLNLQWGEPSAVIDRQLENHQINNSTQELIGHLNFVHPNWIQVLNQTSVNYLDQLDDVSLKKRLNQLAKSQLACLIVADDAPIPNAIRQFVNEQSVPLIQSATASLEIIWRLQSYLARMLAPAITRHGVLLDVLGMGVMITGESGVGKSELALELISRGHGLVADDVVELHRIGPETLEGQCPPLLRDFLEVRGLGMLNIRTIFGETAVRRRKNMKLIVHLEKTVGSSINAYERLPLSNLNEIILNVGIRKVIIPVAAGRNLAVLVEAAVRNYILQLRGIDSTQEFIRRHESEMAGNTAEHFDDSHNE.

Active-site residues include H142 and K163. An ATP-binding site is contributed by G157–S164. Mg(2+) is bound at residue S164. D181 (proton acceptor; for phosphorylation activity. Proton donor; for dephosphorylation activity) is an active-site residue. The tract at residues L205–N214 is important for the catalytic mechanism of both phosphorylation and dephosphorylation. Residue E206 coordinates Mg(2+). The active site involves R249. The tract at residues P270–R275 is important for the catalytic mechanism of dephosphorylation.

This sequence belongs to the HPrK/P family. As to quaternary structure, homohexamer. Mg(2+) serves as cofactor.

The enzyme catalyses [HPr protein]-L-serine + ATP = [HPr protein]-O-phospho-L-serine + ADP + H(+). It catalyses the reaction [HPr protein]-O-phospho-L-serine + phosphate + H(+) = [HPr protein]-L-serine + diphosphate. Its function is as follows. Catalyzes the ATP- as well as the pyrophosphate-dependent phosphorylation of a specific serine residue in HPr, a phosphocarrier protein of the phosphoenolpyruvate-dependent sugar phosphotransferase system (PTS). HprK/P also catalyzes the pyrophosphate-producing, inorganic phosphate-dependent dephosphorylation (phosphorolysis) of seryl-phosphorylated HPr (P-Ser-HPr). The chain is HPr kinase/phosphorylase from Nitrosomonas europaea (strain ATCC 19718 / CIP 103999 / KCTC 2705 / NBRC 14298).